The following is a 141-amino-acid chain: Large ribosomal subunit protein uL16c (141 aa).

Positions 1–17 (MLSPKRTKYRKPHRGNR) are enriched in basic residues. The segment at 1 to 21 (MLSPKRTKYRKPHRGNRKGQA) is disordered.

The protein belongs to the universal ribosomal protein uL16 family. Part of the 50S ribosomal subunit.

Its subcellular location is the plastid. It is found in the chloroplast. This chain is Large ribosomal subunit protein uL16c, found in Ostreococcus tauri.